Reading from the N-terminus, the 343-residue chain is Ubiquitin carboxyl-terminal hydrolase isozyme L5 (343 aa).

The 213-residue stretch at G6–K218 folds into the UCH catalytic domain. The Nucleophile role is filled by C83. H157 (proton donor) is an active-site residue. The disordered stretch occupies residues L242 to E266. The 29-residue stretch at N306–Q334 folds into the ULD domain.

Belongs to the peptidase C12 family. Component of the 19S (PA700) regulatory complex of the 26S proteasome.

It is found in the cytoplasm. The protein localises to the nucleus. The catalysed reaction is Thiol-dependent hydrolysis of ester, thioester, amide, peptide and isopeptide bonds formed by the C-terminal Gly of ubiquitin (a 76-residue protein attached to proteins as an intracellular targeting signal).. Protease that specifically cleaves 'Lys-48'-linked polyubiquitin chains. Deubiquitinating enzyme associated with the 19S regulatory subunit of the 26S proteasome. The sequence is that of Ubiquitin carboxyl-terminal hydrolase isozyme L5 (uch2) from Dictyostelium discoideum (Social amoeba).